We begin with the raw amino-acid sequence, 64 residues long: Sec-independent protein translocase protein TatA (64 aa).

The helical transmembrane segment at L10–G30 threads the bilayer.

This sequence belongs to the TatA/E family. As to quaternary structure, forms a complex with TatC.

It is found in the cell membrane. In terms of biological role, part of the twin-arginine translocation (Tat) system that transports large folded proteins containing a characteristic twin-arginine motif in their signal peptide across membranes. TatA could form the protein-conducting channel of the Tat system. The polypeptide is Sec-independent protein translocase protein TatA (Alkaliphilus oremlandii (strain OhILAs) (Clostridium oremlandii (strain OhILAs))).